Consider the following 379-residue polypeptide: Polycomb group protein FIE2 (379 aa).

WD repeat units follow at residues Asp85–Ser128, Gly131–Ile171, Gly177–Asp217, Val243–Gly280, Val292–Ile333, and Gln340–Arg378.

This sequence belongs to the WD repeat ESC family. As to expression, widely expressed. Expressed in the embryo sac before pollination. After pollination, its expression persists, predominantly in the embryo and at lower levels in the endosperm.

It localises to the nucleus. Its function is as follows. Polycomb group (PcG) protein. PcG proteins act by forming multiprotein complexes, which are required to maintain the transcriptionally repressive state of homeotic genes throughout development. PcG proteins are not required to initiate repression, but to maintain it during later stages of development. They probably act via the methylation of histones, rendering chromatin heritably changed in its expressibility. This Zea mays (Maize) protein is Polycomb group protein FIE2 (FIE2).